The primary structure comprises 106 residues: MYAVLVTGGKQYRVAQGETLRVEKLEVEAGNEIKFDTILMLGDSDGIKLGDALKGASVTAKVVAHGRADKVRIIKFRRRKHHMKRQGHRQHYTEIEITGIAGGDKK.

It belongs to the bacterial ribosomal protein bL21 family. Part of the 50S ribosomal subunit. Contacts protein L20.

Functionally, this protein binds to 23S rRNA in the presence of protein L20. In Xanthomonas euvesicatoria pv. vesicatoria (strain 85-10) (Xanthomonas campestris pv. vesicatoria), this protein is Large ribosomal subunit protein bL21.